A 1086-amino-acid polypeptide reads, in one-letter code: MSDEKISMTLNFPKHKRARRKKYQKEYQERHKEEMMQQLGRRFQNQPSTSSAPPDTVEKIPLPTESTSALPFGDSPRLTEKDYETNYMIDPPVVSTHSAELIKSNRVVIKAEEAEKYMMIKAKSTTSKILQDFQTKILETVKTKRRLQADVPYIIHPCHSMKGRKTPKQKGGDESFTASDVSDDSNDSQDEASTSEPTNRQAPEADKTGEVKDEKQTCNRRNQQRKAKRLRNFEEKERQITLLKKGIDRKKTHPNGIHPDISFNEKGLGNEGPECRCPEPIKTCGLKHGYYAGEDKAIDCKKSNGENLHYYTLRVTPLPSENQLYRTHMAINGEEFEFEGFSLITHAPLPDCMTRAPICKYSMDYEFQLVEEFMPDECFDPEDCDMLFEYIFHEIFEMLDFELRPKHIPSDVESCPMIHIMPRFVQTKDDLVQLWSSKTVLAYFTSKGSSEIMSPEDVNRLCDAQIDQFTRNTSKHKQSIVLNTKFKPSAIRADWFERDEEKKEVYVVHNAIRAQTYTAISLPRIAFLEKTLNKMIQEKQSSGVYNKDFEKTKNELEHLKRENRSARNLKLREPVAGFIETGLKPDVAAHVVMTILACHHIRYNFSLDVFEEVIEYKFNDRRVIELALMHSSFKSHYGTPIDHVKNMITNCGYRRKYGAEDKREKKRVAGIMSLFNIMKGTSGGEPILHNERLEYLGDAVVELIVSHHLYFMLTHHFEGGLATYRTALVQNRNLATLAKNCRIDEMLQYSHGADLINVAEFKHALANAFEAVMAAIYLDGGLAPCDVIFSKAMYGHQPVLKEKWDHINEHELKREDPQGDRDLSFITPTLSTFHALEERLGIQFNNIRLLAKAFTRRNIPNNDLTKGHNQRLEWLGDSVLQLIVSDFLYRRFPYHHEGHMSLLRTSLVSNQTQAVVCDDLGFTEFVIKAPYKTPELKLKDKADLVEAFIGALYVDRGIEHCRAFIRIVFCPRLKHFIESEKWNDAKSHLQQWCLAMRDPSSSEPDMPEYRVLGIEGPTNNRIFKIAVYYKGKRLASAAESNVHKAELRVAELALANLESMSFSKMKAKNNSWFQNMRRRLEQDTSD.

2 disordered regions span residues 1–77 and 158–233; these read MSDE…DSPR and CHSM…LRNF. Positions 13 to 23 are enriched in basic residues; it reads PKHKRARRKKY. A compositionally biased stretch (basic and acidic residues) spans 24–35; that stretch reads QKEYQERHKEEM. A compositionally biased stretch (polar residues) spans 43-53; sequence FQNQPSTSSAP. Positions 159–168 are enriched in basic residues; that stretch reads HSMKGRKTPK. A compositionally biased stretch (acidic residues) spans 181–190; the sequence is VSDDSNDSQD. The segment covering 191–201 has biased composition (polar residues); the sequence is EASTSEPTNRQ. Positions 203–217 are enriched in basic and acidic residues; the sequence is PEADKTGEVKDEKQT. 2 consecutive RNase III domains span residues 607–781 and 833–957; these read LDVF…LDGG and FHAL…VDRG. Residues Glu694, Asn767, Glu770, Glu873, Asp943, and Glu946 each coordinate Mg(2+). The DRBM domain occupies 984-1059; it reads DAKSHLQQWC…AELALANLES (76 aa).

Belongs to the ribonuclease III family. Requires Mg(2+) as cofactor. Mn(2+) is required as a cofactor.

The protein resides in the nucleus. It carries out the reaction Endonucleolytic cleavage to 5'-phosphomonoester.. Its function is as follows. Executes the initial step of microRNA (miRNA) processing in the nucleus, that is the cleavage of pri-miRNA to release pre-miRNA. Involved in pre-rRNA processing. Cleaves double-strand RNA and does not cleave single-strand RNA. Involved in fertility. Required for the function or synthesis of the let-7 miRNA. The polypeptide is Ribonuclease 3 (drsh-1) (Caenorhabditis elegans).